Consider the following 103-residue polypeptide: Large ribosomal subunit protein uL24 (103 aa).

This sequence belongs to the universal ribosomal protein uL24 family. As to quaternary structure, part of the 50S ribosomal subunit.

Its function is as follows. One of two assembly initiator proteins, it binds directly to the 5'-end of the 23S rRNA, where it nucleates assembly of the 50S subunit. Functionally, one of the proteins that surrounds the polypeptide exit tunnel on the outside of the subunit. The chain is Large ribosomal subunit protein uL24 from Brucella abortus (strain S19).